The primary structure comprises 108 residues: Urease subunit beta (108 aa).

This sequence belongs to the urease beta subunit family. In terms of assembly, heterotrimer of UreA (gamma), UreB (beta) and UreC (alpha) subunits. Three heterotrimers associate to form the active enzyme.

The protein resides in the cytoplasm. It catalyses the reaction urea + 2 H2O + H(+) = hydrogencarbonate + 2 NH4(+). Its pathway is nitrogen metabolism; urea degradation; CO(2) and NH(3) from urea (urease route): step 1/1. The protein is Urease subunit beta of Microcystis aeruginosa (strain NIES-843 / IAM M-2473).